The primary structure comprises 200 residues: Glutathione S-transferase domain-containing protein DDB_G0273153/DDB_G0273923 (200 aa).

Residues 1-71 (MISSIYIFKI…YISNNHNFSG (71 aa)) form the GST N-terminal domain. Positions 73–195 (SLQESARVDD…INSNNINSQS (123 aa)) constitute a GST C-terminal domain.

This sequence belongs to the GST superfamily.

This chain is Glutathione S-transferase domain-containing protein DDB_G0273153/DDB_G0273923, found in Dictyostelium discoideum (Social amoeba).